The chain runs to 280 residues: Probable endonuclease lcl3 (280 aa).

The helical transmembrane segment at 50–67 threads the bilayer; sequence TLIPTLILTTAILSAARF. In terms of domain architecture, TNase-like spans 89–257; sequence RSIYGKVTSV…KLKGNGMWKG (169 aa). Arg140 is a catalytic residue. Ca(2+) is bound at residue Asp145. Catalysis depends on residues Glu148 and Arg188.

It belongs to the LCL3 family.

It localises to the mitochondrion. It is found in the membrane. The polypeptide is Probable endonuclease lcl3 (lcl3) (Emericella nidulans (strain FGSC A4 / ATCC 38163 / CBS 112.46 / NRRL 194 / M139) (Aspergillus nidulans)).